A 290-amino-acid polypeptide reads, in one-letter code: 6-phospho-5-dehydro-2-deoxy-D-gluconate aldolase (290 aa).

The active-site Proton donor is aspartate 85. Histidine 86 and histidine 180 together coordinate Zn(2+). Glycine 181 lines the dihydroxyacetone phosphate pocket. Position 208 (histidine 208) interacts with Zn(2+). Residues 209-211 and 230-233 contribute to the dihydroxyacetone phosphate site; these read GAS and NINT. Position 233 is a phosphothreonine (threonine 233).

The protein belongs to the class II fructose-bisphosphate aldolase family. IolJ subfamily. Zn(2+) is required as a cofactor.

It carries out the reaction 6-phospho-5-dehydro-2-deoxy-D-gluconate = 3-oxopropanoate + dihydroxyacetone phosphate. It participates in polyol metabolism; myo-inositol degradation into acetyl-CoA; acetyl-CoA from myo-inositol: step 6/7. Its function is as follows. Produces dihydroxyacetone phosphate (DHAP or glycerone phosphate) and malonic semialdehyde (MSA or 3-oxopropanoate) from 6-phospho-5-dehydro-2-deoxy-D-gluconate (DKGP). The sequence is that of 6-phospho-5-dehydro-2-deoxy-D-gluconate aldolase (iolJ) from Bacillus subtilis (strain 168).